A 375-amino-acid chain; its full sequence is Succinyl-diaminopimelate desuccinylase (375 aa).

Residue H66 coordinates Zn(2+). D68 is an active-site residue. Zn(2+) is bound at residue D99. E133 serves as the catalytic Proton acceptor. E134, E162, and H348 together coordinate Zn(2+).

It belongs to the peptidase M20A family. DapE subfamily. As to quaternary structure, homodimer. Zn(2+) serves as cofactor. It depends on Co(2+) as a cofactor.

The enzyme catalyses N-succinyl-(2S,6S)-2,6-diaminopimelate + H2O = (2S,6S)-2,6-diaminopimelate + succinate. It participates in amino-acid biosynthesis; L-lysine biosynthesis via DAP pathway; LL-2,6-diaminopimelate from (S)-tetrahydrodipicolinate (succinylase route): step 3/3. Catalyzes the hydrolysis of N-succinyl-L,L-diaminopimelic acid (SDAP), forming succinate and LL-2,6-diaminopimelate (DAP), an intermediate involved in the bacterial biosynthesis of lysine and meso-diaminopimelic acid, an essential component of bacterial cell walls. This chain is Succinyl-diaminopimelate desuccinylase, found in Salmonella dublin (strain CT_02021853).